The sequence spans 231 residues: Orotate phosphoribosyltransferase (231 aa).

5-phospho-alpha-D-ribose 1-diphosphate is bound by residues K27, 79-80 (YK), R106, K107, K110, H112, and 133-141 (DDVMTAGTA). Residues T137 and R166 each contribute to the orotate site.

It belongs to the purine/pyrimidine phosphoribosyltransferase family. PyrE subfamily. As to quaternary structure, homodimer. The cofactor is Mg(2+).

It carries out the reaction orotidine 5'-phosphate + diphosphate = orotate + 5-phospho-alpha-D-ribose 1-diphosphate. It participates in pyrimidine metabolism; UMP biosynthesis via de novo pathway; UMP from orotate: step 1/2. Functionally, catalyzes the transfer of a ribosyl phosphate group from 5-phosphoribose 1-diphosphate to orotate, leading to the formation of orotidine monophosphate (OMP). In Bifidobacterium adolescentis (strain ATCC 15703 / DSM 20083 / NCTC 11814 / E194a), this protein is Orotate phosphoribosyltransferase.